The primary structure comprises 206 residues: Transmembrane emp24 domain-containing protein bai (206 aa).

The N-terminal stretch at 1–20 is a signal peptide; that stretch reads MLKVLYVIFTIFGYIWPIYS. Residues 21–172 are Lumenal-facing; it reads VMFHLTPNTQ…RDTNEKTNSR (152 aa). The GOLD domain maps to 30-140; the sequence is QKCLKEDIQA…LKPLEVDLKR (111 aa). A helical membrane pass occupies residues 173–193; sequence VLFFSIFSMCCLLGLATWQVL. The Cytoplasmic portion of the chain corresponds to 194–206; the sequence is YLRRYFKAKKLIE.

This sequence belongs to the EMP24/GP25L family.

It is found in the membrane. Its function is as follows. Eca and bai are essential, though not redundant, for dorsoventral patterning of the embryo. Specifically required during early embryogenesis for the activity of maternal tkv, while the zygotic tkv is not affected. In Drosophila virilis (Fruit fly), this protein is Transmembrane emp24 domain-containing protein bai.